The following is a 788-amino-acid chain: 5-methyltetrahydropteroyltriglutamate--homocysteine methyltransferase (788 aa).

5-methyltetrahydropteroyltri-L-glutamate contacts are provided by residues 24 to 27 and Lys140; that span reads RELK. L-homocysteine-binding positions include 463–465 and Glu516; that span reads IGS. Residues 463 to 465 and Glu516 each bind L-methionine; that span reads IGS. Residues 547 to 548 and Trp593 contribute to the 5-methyltetrahydropteroyltri-L-glutamate site; that span reads RC. Asp631 is a binding site for L-homocysteine. Asp631 contributes to the L-methionine binding site. Position 637 (Glu637) interacts with 5-methyltetrahydropteroyltri-L-glutamate. The Zn(2+) site is built by His673, Cys675, and Glu697. His726 functions as the Proton donor in the catalytic mechanism. Cys758 contributes to the Zn(2+) binding site.

The protein belongs to the vitamin-B12 independent methionine synthase family. Zn(2+) serves as cofactor.

The enzyme catalyses 5-methyltetrahydropteroyltri-L-glutamate + L-homocysteine = tetrahydropteroyltri-L-glutamate + L-methionine. It functions in the pathway amino-acid biosynthesis; L-methionine biosynthesis via de novo pathway; L-methionine from L-homocysteine (MetE route): step 1/1. Functionally, catalyzes the transfer of a methyl group from 5-methyltetrahydrofolate to homocysteine resulting in methionine formation. In Rhodopseudomonas palustris (strain ATCC BAA-98 / CGA009), this protein is 5-methyltetrahydropteroyltriglutamate--homocysteine methyltransferase.